The following is a 109-amino-acid chain: Cell division protein ZapA (109 aa).

A coiled-coil region spans residues Pro-21 to Lys-99.

This sequence belongs to the ZapA family. Type 1 subfamily. In terms of assembly, homodimer. Interacts with FtsZ.

The protein localises to the cytoplasm. In terms of biological role, activator of cell division through the inhibition of FtsZ GTPase activity, therefore promoting FtsZ assembly into bundles of protofilaments necessary for the formation of the division Z ring. It is recruited early at mid-cell but it is not essential for cell division. This is Cell division protein ZapA from Pectobacterium atrosepticum (strain SCRI 1043 / ATCC BAA-672) (Erwinia carotovora subsp. atroseptica).